We begin with the raw amino-acid sequence, 342 residues long: MKALSKLHKEVGIWMTDVPAPELGHNDLLIKIRKTAICGTDIHIYNWDEWSQKTIPVPMVVGHEYVGEVVAIGQEVRGFAVGDRVSGEGHITCGHCRNCRAGRTHLCRNTIGVGVNRPGAFAEYLVIPAFNAFKLPDNVPDELAAIFDPFGNAVHTALSFDLVGEDVLITGAGPIGIMAAAVCRHVGARHVVITDVNEYRLELARKMGATRAVNVTKEQLSGVMSELGMTEGFDVGLEMSGVPSAFQDMIDKMNHGGKIAMLGIPPATMAIDWGKVIFKGLFIKGIYGREMFETWYKMASLIQSGLDLSPIITHRFHIDDFQQGFDAMRSGQSGKVILSWDK.

Residue Cys38 coordinates Zn(2+). Residues Thr40 and His43 each act as charge relay system in the active site. Zn(2+) is bound by residues His63, Glu64, Cys93, Cys96, Cys99, and Cys107. NAD(+) is bound by residues Ile175, Asp195, Arg200, 262–264, and 286–287; these read LGI and IY.

It belongs to the zinc-containing alcohol dehydrogenase family. Homotetramer. Zn(2+) is required as a cofactor.

It is found in the cytoplasm. It carries out the reaction L-threonine + NAD(+) = (2S)-2-amino-3-oxobutanoate + NADH + H(+). The protein operates within amino-acid degradation; L-threonine degradation via oxydo-reductase pathway; glycine from L-threonine: step 1/2. Functionally, catalyzes the NAD(+)-dependent oxidation of L-threonine to 2-amino-3-ketobutyrate. This is L-threonine 3-dehydrogenase from Aeromonas hydrophila subsp. hydrophila (strain ATCC 7966 / DSM 30187 / BCRC 13018 / CCUG 14551 / JCM 1027 / KCTC 2358 / NCIMB 9240 / NCTC 8049).